Consider the following 58-residue polypeptide: uncharacterized protein (58 aa).

Helical transmembrane passes span 7 to 27 and 29 to 49; these read IFDIVMYIIFGVLSLFLVAKT and YGTGVLVFVAILYLAVIAYKI.

It is found in the cell membrane. This is an uncharacterized protein from Bacillus subtilis (strain 168).